Reading from the N-terminus, the 573-residue chain is SHC-transforming protein 2 (573 aa).

The PID domain occupies 125 to 309; sequence LGPGVSYIVR…LEELAWGDDD (185 aa). The tract at residues 310–477 is CH1; the sequence is AAADHNYYNS…PTEEQLRQEP (168 aa). Y316, Y317, and Y395 each carry phosphotyrosine. In terms of domain architecture, SH2 spans 478–569; it reads WYHGRMSRRA…ESELHLRGVV (92 aa).

Interacts with the Trk receptors in a phosphotyrosine-dependent manner and MEGF12. Once activated, binds to GRB2. Phosphorylated on tyrosine by the Trk receptors. In terms of tissue distribution, expressed in brain. Expressed at high level in the hypothalamus and at low level in the caudate nucleus.

Functionally, signaling adapter that couples activated growth factor receptors to signaling pathway in neurons. Involved in the signal transduction pathways of neurotrophin-activated Trk receptors in cortical neurons. This is SHC-transforming protein 2 (Shc2) from Mus musculus (Mouse).